The chain runs to 187 residues: NADPH-dependent 3-demethoxyubiquinone 3-hydroxylase, mitochondrial (187 aa).

Residues methionine 1–glycine 8 constitute a mitochondrion transit peptide. Lysine 21 contributes to the NADH binding site. Repeat copies occupy residues alanine 28 to leucine 99 and glycine 100 to isoleucine 187. Residues alanine 28 to isoleucine 187 are 2 X approximate tandem repeats. Residues glutamate 30, glutamate 60, histidine 63, glutamate 112, glutamate 148, and histidine 151 each contribute to the Fe cation site. Lysine 186 is a binding site for NADH.

This sequence belongs to the COQ7 family. Component of a multi-subunit COQ enzyme complex. Fe cation serves as cofactor.

The protein localises to the mitochondrion inner membrane. Its subcellular location is the mitochondrion. The protein resides in the nucleus. It catalyses the reaction a 5-methoxy-2-methyl-3-(all-trans-polyprenyl)benzoquinone + NADH + O2 = a 3-demethylubiquinone + NAD(+) + H2O. It functions in the pathway cofactor biosynthesis; ubiquinone biosynthesis. Functionally, catalyzes the hydroxylation of the 5-methoxy-2-methyl-3-(all-trans-polyprenyl)benzoquinone at the C6 position and participates in the biosynthesis of ubiquinone. Catalyzes the reaction through a substrate-mediated reduction pathway, whereby NADH shuttles electrons to 5-methoxy-2-methyl-3-(all-trans-decaprenyl)benzoquinone, which then transfers the electrons to the two Fe(3+) centers. The binding of 5-methoxy-2-methyl-3-(all-trans-polyprenyl)benzoquinone (DMQn) mediates reduction of the diiron center by nicotinamide adenine dinucleotide (NADH) and initiates oxygen activation for subsequent DMQ hydroxylation. Also has a structural role in the COQ enzyme complex, stabilizing other COQ polypeptides. Involved in lifespan determination in a ubiquinone-independent manner. Plays a role in modulating mitochondrial stress responses, acting in the nucleus, perhaps via regulating gene expression, independent of its characterized mitochondrial function in ubiquinone biosynthesis. Plays a role in modulating polyribosome formation. The polypeptide is NADPH-dependent 3-demethoxyubiquinone 3-hydroxylase, mitochondrial (Caenorhabditis elegans).